Consider the following 196-residue polypeptide: Transcription repressor OFP10 (196 aa).

The OVATE domain occupies 100-159 (MAKESINPFEDYKKSMNQMIEERYIETESELKELLRCFLDINPSPQHNLIVRAFVDVCSH).

In terms of tissue distribution, expressed in roots, cauline leaves, shoots, stems, flower buds and siliques.

It is found in the nucleus. Functionally, transcriptional repressor that may regulate multiple aspects of plant growth and development through the regulation of BEL1-LIKE (BLH) and KNOX TALE (KNAT) homeodomain transcription factors. The protein is Transcription repressor OFP10 (OFP10) of Arabidopsis thaliana (Mouse-ear cress).